The sequence spans 293 residues: Protein boule-like (293 aa).

The span at 1–16 (METESRAQSTNQTQTD) shows a compositional bias: polar residues. Residues 1 to 39 (METESRAQSTNQTQTDSLSPSPNPVSPVPLNNPTSGPRY) form a disordered region. Phosphoserine is present on residues S19, S21, and S26. An RRM domain is found at 45 to 122 (NRIFVGGIDF…KKLNIGPAIR (78 aa)). In terms of domain architecture, DAZ spans 172–196 (PSRSISSSPVMVAQPVYQQPAYHYQ).

It belongs to the RRM DAZ family. As to quaternary structure, interacts with DAZ1 and DAZL. As to expression, testis specific. Not expressed in early embryos, primoridal germ cells and spermatogonial cells. First expressed in the cytoplasm of spermatocytes and then persists through meiosis.

It localises to the cytoplasm. Probable RNA-binding protein, which may be required during spermatogenesis. May act by binding to the 3'-UTR of mRNAs and regulating their translation. This chain is Protein boule-like, found in Mus musculus (Mouse).